We begin with the raw amino-acid sequence, 302 residues long: Putative S-adenosyl-L-methionine-dependent methyltransferase MRA_0290 (302 aa).

Residues Asp-126 and 155 to 156 (DL) contribute to the S-adenosyl-L-methionine site.

This sequence belongs to the UPF0677 family.

Exhibits S-adenosyl-L-methionine-dependent methyltransferase activity. This chain is Putative S-adenosyl-L-methionine-dependent methyltransferase MRA_0290, found in Mycobacterium tuberculosis (strain ATCC 25177 / H37Ra).